A 427-amino-acid polypeptide reads, in one-letter code: Peptidase B (427 aa).

2 residues coordinate Mn(2+): K195 and D200. The active site involves K207. Mn(2+) contacts are provided by D218, D277, and E279. R281 is a catalytic residue.

It belongs to the peptidase M17 family. As to quaternary structure, homohexamer. Mn(2+) is required as a cofactor.

The protein resides in the cytoplasm. The catalysed reaction is Release of an N-terminal amino acid, Xaa, from a peptide or arylamide. Xaa is preferably Glu or Asp but may be other amino acids, including Leu, Met, His, Cys and Gln.. Functionally, probably plays an important role in intracellular peptide degradation. This chain is Peptidase B, found in Shigella boydii serotype 18 (strain CDC 3083-94 / BS512).